The sequence spans 37 residues: Large ribosomal subunit protein bL36c (37 aa).

Belongs to the bacterial ribosomal protein bL36 family.

Its subcellular location is the plastid. The protein localises to the chloroplast. The protein is Large ribosomal subunit protein bL36c of Cycas taitungensis (Prince sago).